A 195-amino-acid polypeptide reads, in one-letter code: NADH-quinone oxidoreductase subunit B (195 aa).

Residues cysteine 74, cysteine 75, cysteine 139, and cysteine 169 each coordinate [4Fe-4S] cluster.

The protein belongs to the complex I 20 kDa subunit family. As to quaternary structure, NDH-1 is composed of 14 different subunits. Subunits NuoB, C, D, E, F, and G constitute the peripheral sector of the complex. It depends on [4Fe-4S] cluster as a cofactor.

Its subcellular location is the cell inner membrane. It catalyses the reaction a quinone + NADH + 5 H(+)(in) = a quinol + NAD(+) + 4 H(+)(out). NDH-1 shuttles electrons from NADH, via FMN and iron-sulfur (Fe-S) centers, to quinones in the respiratory chain. The immediate electron acceptor for the enzyme in this species is believed to be ubiquinone. Couples the redox reaction to proton translocation (for every two electrons transferred, four hydrogen ions are translocated across the cytoplasmic membrane), and thus conserves the redox energy in a proton gradient. The protein is NADH-quinone oxidoreductase subunit B of Methylobacterium radiotolerans (strain ATCC 27329 / DSM 1819 / JCM 2831 / NBRC 15690 / NCIMB 10815 / 0-1).